Reading from the N-terminus, the 149-residue chain is Urease accessory protein UreE (149 aa).

Belongs to the UreE family.

It is found in the cytoplasm. Involved in urease metallocenter assembly. Binds nickel. Probably functions as a nickel donor during metallocenter assembly. The sequence is that of Urease accessory protein UreE from Ureaplasma parvum serovar 3 (strain ATCC 700970).